Reading from the N-terminus, the 267-residue chain is tRNA pseudouridine synthase A (267 aa).

The Nucleophile role is filled by Asp-52. Tyr-110 contributes to the substrate binding site.

The protein belongs to the tRNA pseudouridine synthase TruA family. Homodimer.

The enzyme catalyses uridine(38/39/40) in tRNA = pseudouridine(38/39/40) in tRNA. In terms of biological role, formation of pseudouridine at positions 38, 39 and 40 in the anticodon stem and loop of transfer RNAs. This is tRNA pseudouridine synthase A from Paraburkholderia phymatum (strain DSM 17167 / CIP 108236 / LMG 21445 / STM815) (Burkholderia phymatum).